The primary structure comprises 447 residues: DNA primase DnaG (447 aa).

Residues Asp-200–Glu-274 form the Toprim domain. Mg(2+)-binding residues include Glu-206, Asp-248, and Asp-250.

The protein belongs to the archaeal DnaG primase family. As to quaternary structure, forms a ternary complex with MCM helicase and DNA. Component of the archaeal exosome complex. Mg(2+) is required as a cofactor.

It catalyses the reaction ssDNA + n NTP = ssDNA/pppN(pN)n-1 hybrid + (n-1) diphosphate.. Its function is as follows. RNA polymerase that catalyzes the synthesis of short RNA molecules used as primers for DNA polymerase during DNA replication. Also part of the exosome, which is a complex involved in RNA degradation. Acts as a poly(A)-binding protein that enhances the interaction between heteromeric, adenine-rich transcripts and the exosome. In Pyrococcus abyssi (strain GE5 / Orsay), this protein is DNA primase DnaG.